Here is a 219-residue protein sequence, read N- to C-terminus: Transcriptional regulator AcuR (219 aa).

A disordered region spans residues Met-1–Ala-25. In terms of domain architecture, HTH tetR-type spans Ser-26–Phe-86. A DNA-binding region (H-T-H motif) is located at residues Gly-49 to Phe-68.

Functionally, a transcriptional repressor for its operon. Probably binds to 2 operator sequences in the promoter. The protein is Transcriptional regulator AcuR (acuR) of Cereibacter sphaeroides (strain ATCC 17023 / DSM 158 / JCM 6121 / CCUG 31486 / LMG 2827 / NBRC 12203 / NCIMB 8253 / ATH 2.4.1.) (Rhodobacter sphaeroides).